The primary structure comprises 119 residues: Small ribosomal subunit protein uS10 (119 aa).

An N-acetylalanine modification is found at Ala-2. Lys-4 participates in a covalent cross-link: Glycyl lysine isopeptide (Lys-Gly) (interchain with G-Cter in ubiquitin). Lys-8 is subject to N6-succinyllysine; alternate. Residue Lys-8 forms a Glycyl lysine isopeptide (Lys-Gly) (interchain with G-Cter in ubiquitin); alternate linkage. Thr-9 carries the phosphothreonine modification. N6-acetyllysine occurs at positions 34 and 75. A Phosphoserine modification is found at Ser-93.

This sequence belongs to the universal ribosomal protein uS10 family. As to quaternary structure, component of the 40S small ribosomal subunit. Polyubiquitinated by ZNF598 via 'Lys-63'-linked ubiquitin chains when a ribosome has stalled, initiating the ribosome quality control (RQC) pathway to degrade the potentially detrimental aberrant nascent polypeptide. Deubiquitinated by OTUD3 and USP21, antagonizing ZNF598 activity. Post-translationally, ufmylated by UFL1.

The protein resides in the cytoplasm. In terms of biological role, component of the small ribosomal subunit. The ribosome is a large ribonucleoprotein complex responsible for the synthesis of proteins in the cell. This chain is Small ribosomal subunit protein uS10 (RPS20), found in Sus scrofa (Pig).